Here is a 199-residue protein sequence, read N- to C-terminus: 3-isopropylmalate dehydratase small subunit (199 aa).

This sequence belongs to the LeuD family. LeuD type 1 subfamily. As to quaternary structure, heterodimer of LeuC and LeuD.

It carries out the reaction (2R,3S)-3-isopropylmalate = (2S)-2-isopropylmalate. Its pathway is amino-acid biosynthesis; L-leucine biosynthesis; L-leucine from 3-methyl-2-oxobutanoate: step 2/4. In terms of biological role, catalyzes the isomerization between 2-isopropylmalate and 3-isopropylmalate, via the formation of 2-isopropylmaleate. This chain is 3-isopropylmalate dehydratase small subunit, found in Tolumonas auensis (strain DSM 9187 / NBRC 110442 / TA 4).